Consider the following 208-residue polypeptide: Histone H1t (208 aa).

Residues 1–16 are compositionally biased toward low complexity; sequence MSETVPAASAGAVPAV. Residues 1 to 40 are disordered; sequence MSETVPAASAGAVPAVMEKPLTKKRGKKPAGLTSASRKAP. Ser-9 bears the Phosphoserine mark. Residues 40 to 113 enclose the H15 domain; it reads PNLSVSKLIT…GASGSFKLSK (74 aa). Arg-58 is subject to Citrulline. Positions 102 to 208 are disordered; that stretch reads GTGASGSFKL…ANIRKATSRK (107 aa). The span at 111-136 shows a compositional bias: basic residues; it reads LSKKVLPKSTRRKANKSASAKTKKLV. Ser-143 carries the phosphoserine modification. Residues 148–157 are compositionally biased toward basic residues; that stretch reads KTNKRAKKPR. Thr-159 carries the phosphothreonine modification. The segment covering 163–175 has biased composition (basic residues); it reads KAVRSGRKAKGAK. Phosphoserine occurs at positions 167 and 182. Basic residues predominate over residues 187–208; sequence RATKPKLTQHHKANIRKATSRK.

It belongs to the histone H1/H5 family. In terms of processing, phosphorylated in early spermatids. Citrullination at Arg-58 (H1R54ci) by PADI4 takes place within the DNA-binding site of H1 and results in its displacement from chromatin and global chromatin decondensation, thereby promoting pluripotency and stem cell maintenance.

Functionally, testis-specific histone H1 that forms less compacted chromatin compared to other H1 histone subtypes. Formation of more relaxed chromatin may be required to promote chromatin architecture required for proper chromosome regulation during meiosis, such as homologous recombination. Histones H1 act as linkers that bind to nucleosomes and compact polynucleosomes into a higher-order chromatin configuration. The protein is Histone H1t of Macaca mulatta (Rhesus macaque).